We begin with the raw amino-acid sequence, 38 residues long: Conotoxin FVIA (38 aa).

Residues 1–12 (ILSLSLLDRSTR) constitute a propeptide that is removed on maturation. 3 disulfide bridges follow: Cys-13–Cys-28, Cys-20–Cys-32, and Cys-27–Cys-37. Cys-37 bears the Cysteine amide mark.

Belongs to the conotoxin O1 superfamily. As to expression, expressed by the venom duct.

It localises to the secreted. Omega-conotoxins act at presynaptic membranes, they bind and block voltage-gated calcium channels (Cav). This peptide reversibly and selectively inhibits Cav2.2/CACNA1B (IC(50)=11.5 nM) voltage-gated calcium channels. Channel time recovery after toxin exposure is short (about 50 seconds). In vivo, it effectively and dose-dependently reduces nociceptive behavior in the formalin test and in neuropathic pain models, and reduces mechanical and thermal allodynia in the tail nerve injury rat model. It also shows significant analgesic effects on writhing in mouse neurotransmitter- and cytokine-induced pain models, though it has no effect on acute thermal pain and interferon-gamma-induced pain. It also depresses blood pressure immediately after administration, but pressure recovers relatively quickly and completely. The polypeptide is Conotoxin FVIA (Conus fulmen (Thunderbolt cone)).